A 135-amino-acid polypeptide reads, in one-letter code: ATP synthase epsilon chain, chloroplastic (135 aa).

Belongs to the ATPase epsilon chain family. F-type ATPases have 2 components, CF(1) - the catalytic core - and CF(0) - the membrane proton channel. CF(1) has five subunits: alpha(3), beta(3), gamma(1), delta(1), epsilon(1). CF(0) has three main subunits: a, b and c.

Its subcellular location is the plastid. The protein localises to the chloroplast thylakoid membrane. In terms of biological role, produces ATP from ADP in the presence of a proton gradient across the membrane. The sequence is that of ATP synthase epsilon chain, chloroplastic from Euglena gracilis.